We begin with the raw amino-acid sequence, 443 residues long: MANDGNGDNNDDPLRQYLMNPRINPPPPSLLTLPENNDVTIPMPITPLELKNRLIFGSFVRSRKESSLPIDALSQNPSTSSSATTSFSDSTDLLLPLTEPNKPVRKSKPTINFHRSKTAPAMAAINNISHPNDPKTDQQSDSKTIVNQAVALLVVYLSLGVLIYWLNRDSYNVKQTHPVVDALYFCIVTMCTIGYGDITPDSVVTKLFSIFFVLVGFGFMDILLSGMVTYVLDLQENYMLETARNESLNLNDRDKVRSYIIDVKKGRMRIRLKVGLALGVVVLCLGFGVLIMHFVEKIGWLDSFYFSVMSVTTVGYGDRAFNTLAGRLLAAMWLLVSTLAVARAILFLAESRVDKRNRERAKKVLGESMSISQFLDADIDCNGCVSKAEFVIYKLKKMDKITEKDINPIGFQFDKLDRTNSGRITLLDLLESSTKDLPTATSI.

At 1–144 (MANDGNGDNN…KTDQQSDSKT (144 aa)) the chain is on the cytoplasmic side. The tract at residues 67 to 109 (SLPIDALSQNPSTSSSATTSFSDSTDLLLPLTEPNKPVRKSKP) is disordered. The span at 72–98 (ALSQNPSTSSSATTSFSDSTDLLLPLT) shows a compositional bias: low complexity. The chain crosses the membrane as a helical span at residues 145-165 (IVNQAVALLVVYLSLGVLIYW). The segment at residues 181-200 (DALYFCIVTMCTIGYGDITP) is an intramembrane region (pore-forming). Residues 208-228 (FSIFFVLVGFGFMDILLSGMV) traverse the membrane as a helical segment. Over 229–274 (TYVLDLQENYMLETARNESLNLNDRDKVRSYIIDVKKGRMRIRLKV) the chain is Cytoplasmic. Residues 275 to 295 (GLALGVVVLCLGFGVLIMHFV) form a helical membrane-spanning segment. The pore-forming intramembrane region spans 302–321 (DSFYFSVMSVTTVGYGDRAF). A helical transmembrane segment spans residues 328 to 348 (LLAAMWLLVSTLAVARAILFL). Over 349–443 (AESRVDKRNR…TKDLPTATSI (95 aa)) the chain is Cytoplasmic. EF-hand domains lie at 365–400 (LGES…KMDK) and 404–439 (KDIN…DLPT). Positions 378, 380, 382, 384, 389, 417, 421, 423, and 428 each coordinate Ca(2+).

The protein belongs to the two pore domain potassium channel (TC 1.A.1.7) family. In terms of assembly, homodimer. As to expression, expressed in roots, stems, leaves and flowers.

It localises to the vacuole membrane. Probable voltage-independent potassium-selective tonoplast ion channel. This chain is Two-pore potassium channel 2 (TPK2), found in Arabidopsis thaliana (Mouse-ear cress).